Here is a 147-residue protein sequence, read N- to C-terminus: Large ribosomal subunit protein uL13 (147 aa).

It belongs to the universal ribosomal protein uL13 family. As to quaternary structure, part of the 50S ribosomal subunit.

This protein is one of the early assembly proteins of the 50S ribosomal subunit, although it is not seen to bind rRNA by itself. It is important during the early stages of 50S assembly. In Nocardioides sp. (strain ATCC BAA-499 / JS614), this protein is Large ribosomal subunit protein uL13.